The chain runs to 419 residues: Arginine biosynthesis bifunctional protein ArgJ 1, mitochondrial (419 aa).

The substrate site is built by Lys177, Thr188, Glu275, Asn414, and Thr419. Thr188 acts as the Nucleophile in catalysis.

Belongs to the ArgJ family. In terms of assembly, heterodimer of an alpha and a beta chain. In terms of processing, the alpha and beta chains are autoproteolytically processed from a single precursor protein within the mitochondrion.

Its subcellular location is the mitochondrion matrix. It catalyses the reaction N(2)-acetyl-L-ornithine + L-glutamate = N-acetyl-L-glutamate + L-ornithine. It carries out the reaction L-glutamate + acetyl-CoA = N-acetyl-L-glutamate + CoA + H(+). Its pathway is amino-acid biosynthesis; L-arginine biosynthesis; L-ornithine and N-acetyl-L-glutamate from L-glutamate and N(2)-acetyl-L-ornithine (cyclic): step 1/1. It participates in amino-acid biosynthesis; L-arginine biosynthesis; N(2)-acetyl-L-ornithine from L-glutamate: step 1/4. Functionally, catalyzes two activities which are involved in the cyclic version of arginine biosynthesis: the synthesis of acetylglutamate from glutamate and acetyl-CoA, and of ornithine by transacetylation between acetylornithine and glutamate. In Sclerotinia sclerotiorum (strain ATCC 18683 / 1980 / Ss-1) (White mold), this protein is Arginine biosynthesis bifunctional protein ArgJ 1, mitochondrial.